A 252-amino-acid polypeptide reads, in one-letter code: Thiazole synthase (252 aa).

K98 functions as the Schiff-base intermediate with DXP in the catalytic mechanism. Residues G159, 185 to 186 (AG), and 207 to 208 (AT) contribute to the 1-deoxy-D-xylulose 5-phosphate site.

This sequence belongs to the ThiG family. As to quaternary structure, homotetramer. Forms heterodimers with either ThiH or ThiS.

It localises to the cytoplasm. It carries out the reaction [ThiS sulfur-carrier protein]-C-terminal-Gly-aminoethanethioate + 2-iminoacetate + 1-deoxy-D-xylulose 5-phosphate = [ThiS sulfur-carrier protein]-C-terminal Gly-Gly + 2-[(2R,5Z)-2-carboxy-4-methylthiazol-5(2H)-ylidene]ethyl phosphate + 2 H2O + H(+). The protein operates within cofactor biosynthesis; thiamine diphosphate biosynthesis. Catalyzes the rearrangement of 1-deoxy-D-xylulose 5-phosphate (DXP) to produce the thiazole phosphate moiety of thiamine. Sulfur is provided by the thiocarboxylate moiety of the carrier protein ThiS. In vitro, sulfur can be provided by H(2)S. The polypeptide is Thiazole synthase (Mycolicibacterium smegmatis (strain ATCC 700084 / mc(2)155) (Mycobacterium smegmatis)).